Here is a 113-residue protein sequence, read N- to C-terminus: Dolichyl-diphosphooligosaccharide--protein glycosyltransferase subunit dad1 (113 aa).

Topologically, residues 1–30 (MSVSVFSVVSRFLDEYVSSTPQRLKLLDAY) are cytoplasmic. A helical transmembrane segment spans residues 31–51 (LLYILLTGALQFLYCLLVGTF). P52 is a topological domain (lumenal). A helical membrane pass occupies residues 53-73 (FNSFLSGFISSVGSFILAVCL). At 74–92 (RIQINPQNKSDFQGISPER) the chain is on the cytoplasmic side. A helical transmembrane segment spans residues 93 to 113 (AFADFLFANTILHLVVVNFIG).

Belongs to the DAD/OST2 family. Component of the oligosaccharyltransferase (OST) complex.

Its subcellular location is the endoplasmic reticulum membrane. It functions in the pathway protein modification; protein glycosylation. Subunit of the oligosaccharyl transferase (OST) complex that catalyzes the initial transfer of a defined glycan (Glc(3)Man(9)GlcNAc(2) in eukaryotes) from the lipid carrier dolichol-pyrophosphate to an asparagine residue within an Asn-X-Ser/Thr consensus motif in nascent polypeptide chains, the first step in protein N-glycosylation. N-glycosylation occurs cotranslationally and the complex associates with the Sec61 complex at the channel-forming translocon complex that mediates protein translocation across the endoplasmic reticulum (ER). All subunits are required for a maximal enzyme activity. The polypeptide is Dolichyl-diphosphooligosaccharide--protein glycosyltransferase subunit dad1 (Xenopus laevis (African clawed frog)).